Consider the following 1454-residue polypeptide: Receptor-type tyrosine-protein phosphatase T (1454 aa).

The first 29 residues, 1–29 (MGSLGGLALCLLRLLLLGLQRPPLPGAGA), serve as a signal peptide directing secretion. Residues 30–770 (QSAAGGCSFD…EKQVDNTVKM (741 aa)) are Extracellular-facing. The 162-residue stretch at 34–195 (GGCSFDEHYS…VRVLAHPCRK (162 aa)) folds into the MAM domain. Asparagine 82, asparagine 102, asparagine 141, and asparagine 212 each carry an N-linked (GlcNAc...) asparagine glycan. One can recognise an Ig-like C2-type domain in the interval 197–288 (PHFLRLQNVE…SGVSNYAELI (92 aa)). The cysteines at positions 217 and 271 are disulfide-linked. Fibronectin type-III domains lie at 295 to 388 (PIAP…TKCA), 393 to 487 (GPQN…TEED), and 488 to 594 (VPGA…SAPS). N-linked (GlcNAc...) asparagine glycans are attached at residues asparagine 425, asparagine 514, asparagine 551, asparagine 605, asparagine 658, and asparagine 688. The 98-residue stretch at 670-767 (AELKPSNLPV…VEPEKQVDNT (98 aa)) folds into the Fibronectin type-III 4 domain. Residues 771 to 791 (AGVIAGLLMFIIILLGVMLTI) form a helical membrane-spanning segment. The Cytoplasmic segment spans residues 792–1454 (KRRKLAKKQK…EVALEYLSSF (663 aa)). Positions 800 to 852 (QKETQSGAQREMGPVASTDKPTAKLGTNRNDEGFSSSSQDVNGFTDGSRGELS) are disordered. Residues 824–841 (LGTNRNDEGFSSSSQDVN) show a composition bias toward polar residues. Tyrosine-protein phosphatase domains lie at 902 to 1156 (FKEE…ILEA) and 1188 to 1450 (IKDE…ALEY). Substrate contacts are provided by residues aspartate 1065, 1097–1103 (CSAGAGR), and glutamine 1141. Cysteine 1097 (phosphocysteine intermediate) is an active-site residue. At serine 1221 the chain carries Phosphoserine. Cysteine 1391 functions as the Phosphocysteine intermediate in the catalytic mechanism.

Belongs to the protein-tyrosine phosphatase family. Receptor class 2B subfamily. In terms of tissue distribution, expression is restricted to the CNS. Distributed throughout the brain and spinal cord.

It localises to the membrane. The catalysed reaction is O-phospho-L-tyrosyl-[protein] + H2O = L-tyrosyl-[protein] + phosphate. Functionally, may be involved in both signal transduction and cellular adhesion in the CNS. May have specific signaling roles in the tyrosine phosphorylation/dephosphorylation pathway in the anterior compartment of the adult cerebellar cortex. The chain is Receptor-type tyrosine-protein phosphatase T (Ptprt) from Mus musculus (Mouse).